The chain runs to 840 residues: Lethal(3)malignant brain tumor-like protein 1 (840 aa).

Serine 117 carries the phosphoserine modification. The segment at 127–269 (EYEDGGAPAG…WSSSQPATGE (143 aa)) is disordered. Acidic residues predominate over residues 156–165 (PNQDPPEDDS). Residues 200-210 (VENSSGSTSAS) show a composition bias toward polar residues. The span at 236–247 (AMEKQEEGKDPE) shows a compositional bias: basic and acidic residues. Residues 250 to 266 (PTASTPESEEWSSSQPA) are compositionally biased toward polar residues. MBT repeat units follow at residues 274–374 (WSWE…LQPP), 382–481 (FSWS…LTPP), and 490–585 (FCWE…LQPP). Positions 447-454 (FDNWDDTY) are interaction with monomethylated and dimethylated peptides. The disordered stretch occupies residues 580–605 (HPLQPPLGPREPSSASPGGCPPLSYR). The CCHHC-type zinc finger occupies 613-656 (SKYSFHHRKCPTPGCDGSGHVTGKFTAHHCLSGCPLAERNQSRL). Zn(2+) contacts are provided by cysteine 622, cysteine 627, histidine 640, and cysteine 646. The tract at residues 657–697 (KAELSDSEASARKKNLSGFSPRKKPRHHGRIGRPPKYRKIP) is disordered. A compositionally biased stretch (basic residues) spans 677-695 (PRKKPRHHGRIGRPPKYRK).

Homodimer. Interacts with RB1/RB (when monomethylated at 'Lys-860'). Interacts with p53/TP53 (when monomethylated at 'Lys-382'). Interacts with CBX3, ETV6, KMT5A and VCP/p97. In terms of processing, ubiquitinated in a VCP/p97-dependent way following DNA damage, leading to its removal from DNA damage sites, promoting accessibility of H4K20me2 mark for DNA repair protein TP53BP1, which is then recruited to DNA damage sites. Widely expressed. Expression is reduced in colorectal cancer cell line SW480 and promyelocytic leukemia cell line HL-60.

The protein localises to the nucleus. Polycomb group (PcG) protein that specifically recognizes and binds mono- and dimethyllysine residues on target proteins, thereby acting as a 'reader' of a network of post-translational modifications. PcG proteins maintain the transcriptionally repressive state of genes: acts as a chromatin compaction factor by recognizing and binding mono- and dimethylated histone H1b/H1-4 at 'Lys-26' (H1bK26me1 and H1bK26me2) and histone H4 at 'Lys-20' (H4K20me1 and H4K20me2), leading to condense chromatin and repress transcription. Recognizes and binds p53/TP53 monomethylated at 'Lys-382', leading to repress p53/TP53-target genes. Also recognizes and binds RB1/RB monomethylated at 'Lys-860'. Participates in the ETV6-mediated repression. Probably plays a role in cell proliferation. Overexpression induces multinucleated cells, suggesting that it is required to accomplish normal mitosis. The sequence is that of Lethal(3)malignant brain tumor-like protein 1 (L3MBTL1) from Homo sapiens (Human).